A 355-amino-acid polypeptide reads, in one-letter code: Ribosomal RNA small subunit methyltransferase H (355 aa).

S-adenosyl-L-methionine contacts are provided by residues 55–57 (GGH), Asp75, Asp122, and Gln129. Residues 327–355 (ERTSQPLPATGAEDFVPAVPGAAEKGRRR) are disordered.

The protein belongs to the methyltransferase superfamily. RsmH family.

It localises to the cytoplasm. The catalysed reaction is cytidine(1402) in 16S rRNA + S-adenosyl-L-methionine = N(4)-methylcytidine(1402) in 16S rRNA + S-adenosyl-L-homocysteine + H(+). Specifically methylates the N4 position of cytidine in position 1402 (C1402) of 16S rRNA. This is Ribosomal RNA small subunit methyltransferase H from Bordetella avium (strain 197N).